The chain runs to 436 residues: 3-ketoacyl-CoA thiolase (436 aa).

Catalysis depends on Cys99, which acts as the Acyl-thioester intermediate. Active-site proton acceptor residues include His392 and Cys422.

It belongs to the thiolase-like superfamily. Thiolase family. Heterotetramer of two alpha chains (FadJ) and two beta chains (FadI).

It is found in the cytoplasm. The enzyme catalyses an acyl-CoA + acetyl-CoA = a 3-oxoacyl-CoA + CoA. Its pathway is lipid metabolism; fatty acid beta-oxidation. Its function is as follows. Catalyzes the final step of fatty acid oxidation in which acetyl-CoA is released and the CoA ester of a fatty acid two carbons shorter is formed. The chain is 3-ketoacyl-CoA thiolase from Shewanella baltica (strain OS185).